We begin with the raw amino-acid sequence, 260 residues long: Translation initiation factor 2 subunit alpha (260 aa).

In terms of domain architecture, S1 motif spans 12–83 (GDLIVGTVHK…KKGHVDASLK (72 aa)).

Belongs to the eIF-2-alpha family. Heterotrimer composed of an alpha, a beta and a gamma chain.

Its function is as follows. eIF-2 functions in the early steps of protein synthesis by forming a ternary complex with GTP and initiator tRNA. The sequence is that of Translation initiation factor 2 subunit alpha from Methanosphaera stadtmanae (strain ATCC 43021 / DSM 3091 / JCM 11832 / MCB-3).